Consider the following 350-residue polypeptide: Dauer larva development regulatory growth factor daf-7 (350 aa).

The signal sequence occupies residues 1–21; sequence MFMASSLPVFIFLLSLPHGLT. The propeptide occupies 22–234; it reads FNCTNSGVCI…TRPKGSRKRR (213 aa). Asn-23 carries N-linked (GlcNAc...) asparagine glycosylation. Cystine bridges form between Cys-241–Cys-251, Cys-250–Cys-315, Cys-278–Cys-347, and Cys-282–Cys-349.

This sequence belongs to the TGF-beta family. Expressed in the chemosensory neurons, including in the ASJ neurons in males. Expressed in the ASI neurons.

The protein resides in the secreted. Functionally, under harsh environmental conditions, larvae enter a developmentally arrested state known as dauer; TGF-beta-like daf-7 acts to inhibit dauer larva formation and promote growth. May be a ligand to cell surface receptor daf-4. May act as a negative regulator of dauer larva development by transducing chemosensory information from ASI neurons. Involved in sensitivity to CO2 levels. Involved in mate searching behavior of males, acting in concert with the neuropeptide pdf-1. In AWC neurons, acts to promote expression of srsx-3, a member of the GPCR family. The protein is Dauer larva development regulatory growth factor daf-7 of Caenorhabditis elegans.